The sequence spans 179 residues: Disulfide bond formation protein B (179 aa).

The Cytoplasmic segment spans residues Met1–Ala14. A helical membrane pass occupies residues Trp15–Tyr31. Over Phe32–Leu49 the chain is Periplasmic. An intrachain disulfide couples Cys41 to Cys44. The chain crosses the membrane as a helical span at residues Ala50–Pro65. Residues Arg66–Trp72 lie on the Cytoplasmic side of the membrane. The chain crosses the membrane as a helical span at residues Leu73–Ile90. Residues Lys91–Glu146 lie on the Periplasmic side of the membrane. Cysteines 105 and 132 form a disulfide. A helical membrane pass occupies residues Trp147–Ser165. At Gln166–Arg179 the chain is on the cytoplasmic side.

This sequence belongs to the DsbB family.

It is found in the cell inner membrane. Its function is as follows. Required for disulfide bond formation in some periplasmic proteins. Acts by oxidizing the DsbA protein. The protein is Disulfide bond formation protein B of Actinobacillus pleuropneumoniae serotype 5b (strain L20).